Consider the following 167-residue polypeptide: Interferon gamma (167 aa).

Positions 1–23 (MNYTSFIFAFQLCIILCSSGYYC) are cleaved as a signal peptide. A Pyrrolidone carboxylic acid modification is found at Q24. N-linked (GlcNAc...) asparagine glycans are attached at residues N39 and N107.

This sequence belongs to the type II (or gamma) interferon family. As to quaternary structure, homodimer. Interacts with IFNGR1 (via extracellular domain); this interaction promotes IFNGR1 dimerization. Released primarily from activated T lymphocytes.

The protein resides in the secreted. Its function is as follows. Type II interferon produced by immune cells such as T-cells and NK cells that plays crucial roles in antimicrobial, antiviral, and antitumor responses by activating effector immune cells and enhancing antigen presentation. Primarily signals through the JAK-STAT pathway after interaction with its receptor IFNGR1 to affect gene regulation. Upon IFNG binding, IFNGR1 intracellular domain opens out to allow association of downstream signaling components JAK2, JAK1 and STAT1, leading to STAT1 activation, nuclear translocation and transcription of IFNG-regulated genes. Many of the induced genes are transcription factors such as IRF1 that are able to further drive regulation of a next wave of transcription. Plays a role in class I antigen presentation pathway by inducing a replacement of catalytic proteasome subunits with immunoproteasome subunits. In turn, increases the quantity, quality, and repertoire of peptides for class I MHC loading. Increases the efficiency of peptide generation also by inducing the expression of activator PA28 that associates with the proteasome and alters its proteolytic cleavage preference. Up-regulates as well MHC II complexes on the cell surface by promoting expression of several key molecules such as cathepsins B/CTSB, H/CTSH, and L/CTSL. Participates in the regulation of hematopoietic stem cells during development and under homeostatic conditions by affecting their development, quiescence, and differentiation. The polypeptide is Interferon gamma (IFNG) (Felis catus (Cat)).